A 176-amino-acid polypeptide reads, in one-letter code: Peptidyl-prolyl cis-trans isomerase cyp6 (176 aa).

Residues 10–173 enclose the PPIase cyclophilin-type domain; the sequence is FFDIAVNGQH…AKIEITDCGE (164 aa).

Belongs to the cyclophilin-type PPIase family.

The catalysed reaction is [protein]-peptidylproline (omega=180) = [protein]-peptidylproline (omega=0). In terms of biological role, PPIases accelerate the folding of proteins. It catalyzes the cis-trans isomerization of proline imidic peptide bonds in oligopeptides. This Rhizopus delemar (strain RA 99-880 / ATCC MYA-4621 / FGSC 9543 / NRRL 43880) (Mucormycosis agent) protein is Peptidyl-prolyl cis-trans isomerase cyp6 (cyp6).